The primary structure comprises 161 residues: S-ribosylhomocysteine lyase (161 aa).

Fe cation is bound by residues His-57, His-61, and Cys-124.

It belongs to the LuxS family. As to quaternary structure, homodimer. Fe cation serves as cofactor.

The enzyme catalyses S-(5-deoxy-D-ribos-5-yl)-L-homocysteine = (S)-4,5-dihydroxypentane-2,3-dione + L-homocysteine. Involved in the synthesis of autoinducer 2 (AI-2) which is secreted by bacteria and is used to communicate both the cell density and the metabolic potential of the environment. The regulation of gene expression in response to changes in cell density is called quorum sensing. Catalyzes the transformation of S-ribosylhomocysteine (RHC) to homocysteine (HC) and 4,5-dihydroxy-2,3-pentadione (DPD). This chain is S-ribosylhomocysteine lyase, found in Macrococcus caseolyticus (strain JCSC5402) (Macrococcoides caseolyticum).